The chain runs to 117 residues: Large ribosomal subunit protein bL19 (117 aa).

The protein belongs to the bacterial ribosomal protein bL19 family.

In terms of biological role, this protein is located at the 30S-50S ribosomal subunit interface and may play a role in the structure and function of the aminoacyl-tRNA binding site. In Leptothrix cholodnii (strain ATCC 51168 / LMG 8142 / SP-6) (Leptothrix discophora (strain SP-6)), this protein is Large ribosomal subunit protein bL19.